Here is a 676-residue protein sequence, read N- to C-terminus: MGVTGILQLPRDRFKRTSFFLWVIILFQRTFSIPLGVIHNSTLQVNDVDKLVCRDKLSSTNQLRSVGLNLEGNGVATDVPSATKRWGFRSGVPPKVVNYEAGEWAENCYNLEIKKPDGSECLPAAPDGIRGFPRCRYVHKVSGTGPCAGDFAFHKEGAFFLYDRLASTVIYRGTTFAEGVVAFLILPQAKKDFFSSHPLREPVNATEDPSSGYYSTTIRYQATGFGTNETEYLFEVDNLTYVQLESRFTPQFLLQLNETIYTSGKRSNTTGKLIWKVNPEIDTTIGEWAFWETKKNLTRKIRSEELSFTVVSNGAKNISGQSPARTSSDPGTNTTTEDHKIMASENSSAMVQVHSQGREAAVSHLTTLATISTSPQSLTTKPGPDNSTHNTPVYKLDISEATQVEQHHRRTDNDSTASDTPSATTAAGPPKAENTNTSKSTDFLDPATTTSPQNHSETAGNNNTHHQDTGEESASSGKLGLITNTIAGVAGLITGGRRTRREAIVNAQPKCNPNLHYWTTQDEGAAIGLAWIPYFGPAAEGIYTEGLMHNQNGLICGLRQLANETTQALQLFLRATTELRTFSILNRKAIDFLLQRWGGTCHILGPDCCIEPHDWTKNITDKIDQIIHDFVDKTLPDQGDNDNWWTGWRQWIPAGIGVTGVIIAVIALFCICKFVF.

The signal sequence occupies residues 1–32; sequence MGVTGILQLPRDRFKRTSFFLWVIILFQRTFS. Residues 33-650 lie on the Extracellular side of the membrane; the sequence is IPLGVIHNST…NDNWWTGWRQ (618 aa). An N-linked (GlcNAc...) asparagine; by host glycan is attached at Asn40. 5 cysteine pairs are disulfide-bonded: Cys53–Cys609, Cys108–Cys135, Cys121–Cys147, Cys511–Cys556, and Cys601–Cys608. The segment at 54–201 is receptor-binding; sequence RDKLSSTNQL…DFFSSHPLRE (148 aa). 11 N-linked (GlcNAc...) asparagine; by host glycosylation sites follow: Asn204, Asn228, Asn238, Asn257, Asn268, Asn296, Asn317, Asn333, Asn346, Asn386, and Asn413. The segment at 305–485 is mucin-like region; that stretch reads ELSFTVVSNG…SGKLGLITNT (181 aa). The segment covering 315 to 335 has biased composition (polar residues); it reads AKNISGQSPARTSSDPGTNTT. A disordered region spans residues 315–337; the sequence is AKNISGQSPARTSSDPGTNTTTE. Over residues 373-391 the composition is skewed to polar residues; the sequence is TSPQSLTTKPGPDNSTHNT. Disordered stretches follow at residues 373–392 and 402–479; these read TSPQ…HNTP and TQVE…SGKL. The span at 414–432 shows a compositional bias: low complexity; the sequence is DSTASDTPSATTAAGPPKA. Residues 433-464 are compositionally biased toward polar residues; sequence ENTNTSKSTDFLDPATTTSPQNHSETAGNNNT. 3 N-linked (GlcNAc...) asparagine; by host glycosylation sites follow: Asn436, Asn454, and Asn462. A fusion peptide region spans residues 524 to 539; it reads GAAIGLAWIPYFGPAA. Residues 554-595 adopt a coiled-coil conformation; that stretch reads LICGLRQLANETTQALQLFLRATTELRTFSILNRKAIDFLLQ. Residue Asn563 is glycosylated (N-linked (GlcNAc...) asparagine; by host). Residues 615–634 adopt a coiled-coil conformation; sequence WTKNITDKIDQIIHDFVDKT. The N-linked (GlcNAc...) asparagine; by host glycan is linked to Asn618. The chain crosses the membrane as a helical span at residues 651–671; it reads WIPAGIGVTGVIIAVIALFCI. 2 S-palmitoyl cysteine; by host lipidation sites follow: Cys670 and Cys672. Residues 672 to 676 are Cytoplasmic-facing; it reads CKFVF.

This sequence belongs to the filoviruses glycoprotein family. In terms of assembly, homotrimer; each monomer consists of a GP1 and a GP2 subunit linked by disulfide bonds. The resulting peplomers (GP1,2) protrude from the virus surface as spikes. Interacts with host integrin alpha-V/ITGAV. Interacts with host CLEC10A. Binds also to host CD209 and CLEC4M/DC-SIGN(R). Interacts with host FOLR1. Interacts with BST2; this interaction inhibits the antiviral effect of BST2 and this allows viral release from infected cells. Interacts with host FCN1; this interaction enhances viral entry. Interacts with host TLR4; this interaction induces cell death in T-lymphocytes or proinflammatory cytokines and SOCS1 production in monocytes. Interacts with host entry receptor NPC1. As to quaternary structure, GP1 and GP2delta are part of GP1,2delta soluble complexes released by ectodomain shedding. The signal peptide region modulates GP's high mannose glycosylation, thereby determining the efficiency of the interactions with DC-SIGN(R). Post-translationally, N-glycosylated. In terms of processing, O-glycosylated in the mucin-like region. Palmitoylation of GP2 is not required for its function. Post-translationally, specific enzymatic cleavages in vivo yield mature proteins. The precursor is processed into GP1 and GP2 by host cell furin in the trans Golgi, and maybe by other host proteases, to yield the mature GP1 and GP2 proteins. The cleavage site corresponds to the furin optimal cleavage sequence [KR]-X-[KR]-R. This cleavage does not seem to be required for function. After the internalization of the virus into cell endosomes, GP1 C-terminus is removed by the endosomal proteases cathepsin B, cathepsin L, or both, leaving a 19-kDa N-terminal fragment which is further digested by cathepsin B. Proteolytic processing of GP1,2 by host ADAM17 can remove the transmembrane anchor of GP2 and leads to shedding of complexes consisting in GP1 and truncated GP2 (GP1,2delta).

It localises to the virion membrane. The protein resides in the host cell membrane. It is found in the secreted. Trimeric GP1,2 complexes form the virion surface spikes and mediate the viral entry processes, with GP1 acting as the receptor-binding subunit and GP2 as the membrane fusion subunit. At later times of infection, down-regulates the expression of various host cell surface molecules that are essential for immune surveillance and cell adhesion. Down-modulates several integrins including ITGA1, ITGA2, ITGA3, ITGA4, ITGA5, ITGA6, ITGAV and ITGB1. This decrease in cell adhesion molecules may lead to cell detachment, contributing to the disruption of blood vessel integrity and hemorrhages developed during infection (cytotoxicity). Interacts with host TLR4 and thereby stimulates the differentiation and activation of monocytes leading to bystander death of T-lymphocytes. Down-regulates as well the function of host natural killer cells. Counteracts the antiviral effect of host BST2/tetherin that restricts release of progeny virions from infected cells. However, cooperates with VP40 and host BST2 to activate canonical NF-kappa-B pathway in a manner dependent on neddylation. Its function is as follows. Functions as a decoy for anti-GP1,2 antibodies thereby contributing to viral immune evasion. Interacts and activates host macrophages and dendritic cells inducing up-regulation of cytokine transcription. This effect is mediated throught activation of host TLR4. Functionally, responsible for binding to the receptor(s) on target cells. Interacts with CD209/DC-SIGN and CLEC4M/DC-SIGNR which act as cofactors for virus entry into dendritic cells (DCs) and endothelial cells. Binding to the macrophage specific lectin CLEC10A also seems to enhance virus infectivity. Interaction with FOLR1/folate receptor alpha may be a cofactor for virus entry in some cell types, although results are contradictory. Members of the Tyro3 receptor tyrosine kinase family also seem to be cell entry factors in filovirus infection. Once attached, the virions are internalized through clathrin-dependent endocytosis and/or macropinocytosis. After internalization of the virus into the endosomes of the host cell, proteolysis of GP1 by two cysteine proteases, CTSB/cathepsin B and CTSL/cathepsin L removes the glycan cap and allows GP1 binding to the host entry receptor NPC1. NPC1-binding, Ca(2+) and acidic pH induce a conformational change of GP2, which unmasks its fusion peptide and permit membranes fusion. In terms of biological role, acts as a class I viral fusion protein. Under the current model, the protein has at least 3 conformational states: pre-fusion native state, pre-hairpin intermediate state, and post-fusion hairpin state. During viral and target cell membrane fusion, the coiled coil regions (heptad repeats) assume a trimer-of-hairpins structure, positioning the fusion peptide in close proximity to the C-terminal region of the ectodomain. The formation of this structure appears to drive apposition and subsequent fusion of viral and target cell membranes. Responsible for penetration of the virus into the cell cytoplasm by mediating the fusion of the membrane of the endocytosed virus particle with the endosomal membrane. Low pH in endosomes induces an irreversible conformational change in GP2, releasing the fusion hydrophobic peptide. This Epomops franqueti (Franquet's epauletted fruit bat) protein is Envelope glycoprotein (GP).